A 112-amino-acid polypeptide reads, in one-letter code: Protein lin-52 homolog (112 aa).

It belongs to the lin-52 family. Component of the DREAM complex. In terms of tissue distribution, expressed in the brain, liver and retina. Highly expressed in the retinal ganglion cell and inner nuclear layers at the parr stage. Expressed at a lower level in inner segments of some retinal photoreceptors.

Functionally, may be involved in retinal development. This Oncorhynchus mykiss (Rainbow trout) protein is Protein lin-52 homolog (lin52).